The chain runs to 457 residues: Cysteine--tRNA ligase (457 aa).

Cysteine 31 is a binding site for Zn(2+). Residues 33 to 43 carry the 'HIGH' region motif; that stretch reads PTVYNYAHIGN. Residues cysteine 211, histidine 236, and glutamate 240 each coordinate Zn(2+). The short motif at 269–273 is the 'KMSKS' region element; the sequence is KMSKS. Lysine 272 is an ATP binding site.

It belongs to the class-I aminoacyl-tRNA synthetase family. In terms of assembly, monomer. Zn(2+) is required as a cofactor.

The protein resides in the cytoplasm. It catalyses the reaction tRNA(Cys) + L-cysteine + ATP = L-cysteinyl-tRNA(Cys) + AMP + diphosphate. The chain is Cysteine--tRNA ligase from Xanthomonas campestris pv. campestris (strain ATCC 33913 / DSM 3586 / NCPPB 528 / LMG 568 / P 25).